The following is a 155-amino-acid chain: Cell division protein SepF (155 aa).

The span at 22–46 (RYVEEPEQRDERPALEKGRAPKEKQ) shows a compositional bias: basic and acidic residues. Residues 22–54 (RYVEEPEQRDERPALEKGRAPKEKQTAGMEQNQ) are disordered.

Belongs to the SepF family. As to quaternary structure, homodimer. Interacts with FtsZ.

Its subcellular location is the cytoplasm. In terms of biological role, cell division protein that is part of the divisome complex and is recruited early to the Z-ring. Probably stimulates Z-ring formation, perhaps through the cross-linking of FtsZ protofilaments. Its function overlaps with FtsA. The sequence is that of Cell division protein SepF from Shouchella clausii (strain KSM-K16) (Alkalihalobacillus clausii).